The following is a 232-amino-acid chain: Zinc-finger homeodomain protein 5 (232 aa).

A compositionally biased stretch (acidic residues) spans 1–11 (MELSEHEEDAG). A disordered region spans residues 1–25 (MELSEHEEDAGDVGGGCSSPPTPPH). A ZF-HD dimerization-type; degenerate zinc finger spans residues 40–86 (YHECLRNHAAASGGHVVDGCGEFMPASTEEPLACAACGCHRSFHRRD). The disordered stretch occupies residues 126–170 (GLPFPGYGTPSGGTGTTTASSSDERLRPSPVQPRRRSRTTFTREQ). Positions 159-222 (RRRSRTTFTR…NNKHSFKQKQ (64 aa)) form a DNA-binding region, homeobox.

In terms of assembly, homo- and heterodimer with other ZFHD proteins.

The protein resides in the nucleus. Functionally, putative transcription factor. The chain is Zinc-finger homeodomain protein 5 (ZHD5) from Oryza sativa subsp. japonica (Rice).